The primary structure comprises 232 residues: Large ribosomal subunit protein uL10c (232 aa).

The N-terminal 52 residues, Met-1–Ala-52, are a transit peptide targeting the chloroplast.

This sequence belongs to the universal ribosomal protein uL10 family. Component of the chloroplast large ribosomal subunit (LSU). Mature 70S chloroplast ribosomes of higher plants consist of a small (30S) and a large (50S) subunit. The 30S small subunit contains 1 molecule of ribosomal RNA (16S rRNA) and 24 different proteins. The 50S large subunit contains 3 rRNA molecules (23S, 5S and 4.5S rRNA) and 33 different proteins.

It is found in the plastid. Its subcellular location is the chloroplast. Functionally, component of the chloroplast ribosome (chloro-ribosome), a dedicated translation machinery responsible for the synthesis of chloroplast genome-encoded proteins, including proteins of the transcription and translation machinery and components of the photosynthetic apparatus. In Spinacia oleracea (Spinach), this protein is Large ribosomal subunit protein uL10c (RPL10).